A 197-amino-acid polypeptide reads, in one-letter code: Phosphoheptose isomerase (197 aa).

Residues 34 to 196 (MVHCLLGGNK…DRTLFPQDEQ (163 aa)) enclose the SIS domain. Residue 49-51 (NGG) coordinates substrate. Residues H58 and E62 each contribute to the Zn(2+) site. Substrate contacts are provided by residues E62, 91–92 (ND), 117–119 (STS), S122, and Q172. Q172 and H180 together coordinate Zn(2+).

Belongs to the SIS family. GmhA subfamily. In terms of assembly, homotetramer. The cofactor is Zn(2+).

Its subcellular location is the cytoplasm. The enzyme catalyses 2 D-sedoheptulose 7-phosphate = D-glycero-alpha-D-manno-heptose 7-phosphate + D-glycero-beta-D-manno-heptose 7-phosphate. The protein operates within carbohydrate biosynthesis; D-glycero-D-manno-heptose 7-phosphate biosynthesis; D-glycero-alpha-D-manno-heptose 7-phosphate and D-glycero-beta-D-manno-heptose 7-phosphate from sedoheptulose 7-phosphate: step 1/1. Its function is as follows. Catalyzes the isomerization of sedoheptulose 7-phosphate in D-glycero-D-manno-heptose 7-phosphate. This is Phosphoheptose isomerase from Shewanella baltica (strain OS223).